Here is a 179-residue protein sequence, read N- to C-terminus: Adenine phosphoribosyltransferase (179 aa).

This sequence belongs to the purine/pyrimidine phosphoribosyltransferase family. As to quaternary structure, homodimer.

The protein localises to the cytoplasm. It catalyses the reaction AMP + diphosphate = 5-phospho-alpha-D-ribose 1-diphosphate + adenine. It participates in purine metabolism; AMP biosynthesis via salvage pathway; AMP from adenine: step 1/1. Catalyzes a salvage reaction resulting in the formation of AMP, that is energically less costly than de novo synthesis. This chain is Adenine phosphoribosyltransferase, found in Bradyrhizobium sp. (strain BTAi1 / ATCC BAA-1182).